The primary structure comprises 260 residues: Apolipoprotein A-I (260 aa).

The signal sequence occupies residues 1–18 (MKFAALALALLLAVGSHA). The tract at residues 32–63 (ARAVLDVYLTQVKDMSLRAVNQLDDPQYAEFK) is 3 X approximate tandem repeats. Repeat copies occupy residues 64 to 85 (TNLAQRIEEMYTQIKTLQGSVS) and 87 to 107 (MTDSFYNTVMEVTKDTRESLN). Residues 64–260 (TNLAQRIEEM…EIIAASVTKS (197 aa)) form a 10 X approximate tandem repeats region. Residues 108 to 118 (VDLEALKSSLA) form a 3; half-length repeat. 5 repeat units span residues 119-140 (PQNEQLKQVIEKHLNDYRTLLT), 141-162 (PIYNDYKTKHDEEMAALKTRLE), 163-184 (PVMEELRTKIQANVEETKAVLM), 185-206 (PMVETVRTKVTERLESLREVVQ), and 207-225 (PYVQEYKEQMKQMYDQAQT). A 9; half-length repeat occupies 226 to 236 (VDTDALRTKIT). Residues 237–260 (PLVEEIKVKMNAIFEIIAASVTKS) form repeat 10.

The protein belongs to the apolipoprotein A1/A4/E family. Strong expression in liver with lower expression in intestine.

It is found in the secreted. Participates in the reverse transport of cholesterol from tissues to the liver for excretion by promoting cholesterol efflux from tissues and by acting as a cofactor for the lecithin cholesterol acyltransferase (LCAT). This chain is Apolipoprotein A-I (apoa1), found in Sparus aurata (Gilthead sea bream).